A 190-amino-acid chain; its full sequence is MRIGILAGSFNPVHIGHLAIANYLAEYEGYDKIWFLITPQNPLKNEGELMNQNLRLRLLQKSIKDYNRFEICTIEWGMPRPSYTIDVLWKLHLDFPQNIFELIIGSDNWIIFHHWKDYRTILENFKILVYPRSNYKSIYFNHPNIYFCKDAPQIEISSAFIRKSIVEGKDIRFYMPEGVCREVVNNLFRP.

The protein belongs to the NadD family.

The enzyme catalyses nicotinate beta-D-ribonucleotide + ATP + H(+) = deamido-NAD(+) + diphosphate. Its pathway is cofactor biosynthesis; NAD(+) biosynthesis; deamido-NAD(+) from nicotinate D-ribonucleotide: step 1/1. In terms of biological role, catalyzes the reversible adenylation of nicotinate mononucleotide (NaMN) to nicotinic acid adenine dinucleotide (NaAD). The polypeptide is Probable nicotinate-nucleotide adenylyltransferase (Azobacteroides pseudotrichonymphae genomovar. CFP2).